The chain runs to 138 residues: Holo-[acyl-carrier-protein] synthase (138 aa).

2 residues coordinate Mg(2+): Asp8 and Glu60.

It belongs to the P-Pant transferase superfamily. AcpS family. The cofactor is Mg(2+).

It localises to the cytoplasm. The enzyme catalyses apo-[ACP] + CoA = holo-[ACP] + adenosine 3',5'-bisphosphate + H(+). In terms of biological role, transfers the 4'-phosphopantetheine moiety from coenzyme A to a Ser of acyl-carrier-protein. This is Holo-[acyl-carrier-protein] synthase from Magnetococcus marinus (strain ATCC BAA-1437 / JCM 17883 / MC-1).